Consider the following 286-residue polypeptide: Pyridoxal kinase PdxY (286 aa).

Substrate contacts are provided by residues Ser-9 and 44 to 45; that span reads TQ. Residues Asp-111, Ala-143, Glu-148, Lys-181, and 208–211 contribute to the ATP site; that span reads RPLV. Residue Asp-223 participates in substrate binding.

This sequence belongs to the pyridoxine kinase family. PdxY subfamily. Homodimer. Mg(2+) is required as a cofactor.

It catalyses the reaction pyridoxal + ATP = pyridoxal 5'-phosphate + ADP + H(+). It functions in the pathway cofactor metabolism; pyridoxal 5'-phosphate salvage; pyridoxal 5'-phosphate from pyridoxal: step 1/1. Functionally, pyridoxal kinase involved in the salvage pathway of pyridoxal 5'-phosphate (PLP). Catalyzes the phosphorylation of pyridoxal to PLP. The chain is Pyridoxal kinase PdxY from Salmonella choleraesuis (strain SC-B67).